A 313-amino-acid chain; its full sequence is MDSLNQTRVTEFVFLGLTDNRVLEMLFFMAFSAIYMLTLSGNILIIIATVFTPSLHTPMYFFLSNLSFIDICHSSVTVPKMLEGLLLERKTISFDNCITQLFFLHLFACAEIFLLIIVAYDRYVAICTPLHYPNVMNMRVCIQLVFALWLGGTVHSLGQTFLTIRLPYCGPNIIDSYFCDVPLVIKLACTDTYLTGILIVTNSGTISLSCFLAVVTSYMVILVSLRKHSAEGRQKALSTCSAHFMVVALFFGPCIFIYTRPDTSFSIDKVVSVFYTVVTPLLNPFIYTLRNEEVKSAMKQLRQRQVFFTKSYT.

Residues 1-25 (MDSLNQTRVTEFVFLGLTDNRVLEM) lie on the Extracellular side of the membrane. N5 is a glycosylation site (N-linked (GlcNAc...) asparagine). Residues 26-49 (LFFMAFSAIYMLTLSGNILIIIAT) form a helical membrane-spanning segment. At 50-57 (VFTPSLHT) the chain is on the cytoplasmic side. A helical transmembrane segment spans residues 58–79 (PMYFFLSNLSFIDICHSSVTVP). Over 80–100 (KMLEGLLLERKTISFDNCITQ) the chain is Extracellular. C97 and C179 are joined by a disulfide. A helical transmembrane segment spans residues 101–120 (LFFLHLFACAEIFLLIIVAY). Cu cation-binding residues include H105 and C109. Over 121–139 (DRYVAICTPLHYPNVMNMR) the chain is Cytoplasmic. Residues 140–158 (VCIQLVFALWLGGTVHSLG) traverse the membrane as a helical segment. Over 159-195 (QTFLTIRLPYCGPNIIDSYFCDVPLVIKLACTDTYLT) the chain is Extracellular. The helical transmembrane segment at 196 to 219 (GILIVTNSGTISLSCFLAVVTSYM) threads the bilayer. Topologically, residues 220 to 235 (VILVSLRKHSAEGRQK) are cytoplasmic. Residues 236–258 (ALSTCSAHFMVVALFFGPCIFIY) traverse the membrane as a helical segment. Residues 259-269 (TRPDTSFSIDK) are Extracellular-facing. Residue R260 coordinates Cu cation. A helical transmembrane segment spans residues 270–289 (VVSVFYTVVTPLLNPFIYTL). Residues 290-313 (RNEEVKSAMKQLRQRQVFFTKSYT) lie on the Cytoplasmic side of the membrane.

Belongs to the G-protein coupled receptor 1 family.

Its subcellular location is the cell membrane. Its activity is regulated as follows. Copper binding enhances receptor activity in response to odorant binding. In terms of biological role, olfactory receptor that is activated by the binding of organosulfur odorants with thioether groups such as (methylthio)methanethiol (MTMT) and bis(methylthiomethyl) disulfide. Also binds odorants cis-cyclooctene and tert-butyl mercaptan. The activity of this receptor is mediated by G proteins which activate adenylyl cyclase. The sequence is that of Olfactory receptor 4E2 from Homo sapiens (Human).